Reading from the N-terminus, the 169-residue chain is Cell division inhibitor SulA (169 aa).

The ftsZ binding stretch occupies residues 106 to 112; the sequence is ALRTGNY. Residues 162–169 form a lon protease binding region; it reads KIHSNLYH.

It belongs to the SulA family. As to quaternary structure, interacts with FtsZ. Is rapidly cleaved and degraded by the Lon protease once DNA damage is repaired.

Component of the SOS system and an inhibitor of cell division. Accumulation of SulA causes rapid cessation of cell division and the appearance of long, non-septate filaments. In the presence of GTP, binds a polymerization-competent form of FtsZ in a 1:1 ratio, thus inhibiting FtsZ polymerization and therefore preventing it from participating in the assembly of the Z ring. This mechanism prevents the premature segregation of damaged DNA to daughter cells during cell division. The protein is Cell division inhibitor SulA of Escherichia fergusonii (strain ATCC 35469 / DSM 13698 / CCUG 18766 / IAM 14443 / JCM 21226 / LMG 7866 / NBRC 102419 / NCTC 12128 / CDC 0568-73).